The chain runs to 213 residues: Bcl-2-related ovarian killer protein (213 aa).

Positions 32–44 (KALCRDYINSRLI) match the BH4 motif. A BH3 motif is present at residues 67 to 83 (VSAILLRLGDELEYIRP). The BH1 signature appears at 113–132 (QIFTAGITWGKVVSLYAVAA). The BH2 signature appears at 165–179 (WLKRRGGWADITKCV). A helical membrane pass occupies residues 190 to 210 (WLVAAVCSFGHFLKAIFFVLL).

It belongs to the Bcl-2 family.

The protein localises to the membrane. In terms of biological role, may play a role in apoptosis. The protein is Bcl-2-related ovarian killer protein of Gallus gallus (Chicken).